Reading from the N-terminus, the 152-residue chain is Coiled-coil domain-containing protein 182 (152 aa).

Residues 46–109 (ADLEILQQKV…RLREEEDRGI (64 aa)) are a coiled coil.

The sequence is that of Coiled-coil domain-containing protein 182 (Ccdc182) from Mus musculus (Mouse).